A 357-amino-acid polypeptide reads, in one-letter code: DNA primase small subunit PriS (357 aa).

Residues Asp-105, Asp-107, and Asp-259 contribute to the active site.

The protein belongs to the eukaryotic-type primase small subunit family. As to quaternary structure, heterodimer of a small subunit (PriS) and a large subunit (PriL). Requires Mg(2+) as cofactor. It depends on Mn(2+) as a cofactor.

Its function is as follows. Catalytic subunit of DNA primase, an RNA polymerase that catalyzes the synthesis of short RNA molecules used as primers for DNA polymerase during DNA replication. The small subunit contains the primase catalytic core and has DNA synthesis activity on its own. Binding to the large subunit stabilizes and modulates the activity, increasing the rate of DNA synthesis while decreasing the length of the DNA fragments, and conferring RNA synthesis capability. The DNA polymerase activity may enable DNA primase to also catalyze primer extension after primer synthesis. May also play a role in DNA repair. The sequence is that of DNA primase small subunit PriS from Methanococcus maripaludis (strain DSM 14266 / JCM 13030 / NBRC 101832 / S2 / LL).